The chain runs to 152 residues: Deoxyuridine 5'-triphosphate nucleotidohydrolase (152 aa).

Substrate-binding positions include 71–73, N84, 88–90, and M98; these read RSG and LID.

It belongs to the dUTPase family. The cofactor is Mg(2+).

The catalysed reaction is dUTP + H2O = dUMP + diphosphate + H(+). The protein operates within pyrimidine metabolism; dUMP biosynthesis; dUMP from dCTP (dUTP route): step 2/2. This enzyme is involved in nucleotide metabolism: it produces dUMP, the immediate precursor of thymidine nucleotides and it decreases the intracellular concentration of dUTP so that uracil cannot be incorporated into DNA. The sequence is that of Deoxyuridine 5'-triphosphate nucleotidohydrolase from Shewanella baltica (strain OS185).